Consider the following 98-residue polypeptide: Integration host factor subunit alpha (98 aa).

A compositionally biased stretch (basic and acidic residues) spans 53 to 69 (DLREKSERPGRNPKTGE). The disordered stretch occupies residues 53–73 (DLREKSERPGRNPKTGEDIPI).

This sequence belongs to the bacterial histone-like protein family. Heterodimer of an alpha and a beta chain.

Its function is as follows. This protein is one of the two subunits of integration host factor, a specific DNA-binding protein that functions in genetic recombination as well as in transcriptional and translational control. The protein is Integration host factor subunit alpha of Aliivibrio salmonicida (strain LFI1238) (Vibrio salmonicida (strain LFI1238)).